The chain runs to 227 residues: Ribosomal RNA large subunit methyltransferase E (227 aa).

Residues Gly78, Trp80, Asp103, Asp119, and Asp143 each contribute to the S-adenosyl-L-methionine site. The Proton acceptor role is filled by Lys183.

The protein belongs to the class I-like SAM-binding methyltransferase superfamily. RNA methyltransferase RlmE family.

The protein localises to the cytoplasm. The enzyme catalyses uridine(2552) in 23S rRNA + S-adenosyl-L-methionine = 2'-O-methyluridine(2552) in 23S rRNA + S-adenosyl-L-homocysteine + H(+). In terms of biological role, specifically methylates the uridine in position 2552 of 23S rRNA at the 2'-O position of the ribose in the fully assembled 50S ribosomal subunit. The polypeptide is Ribosomal RNA large subunit methyltransferase E (Rickettsia felis (strain ATCC VR-1525 / URRWXCal2) (Rickettsia azadi)).